The primary structure comprises 292 residues: Elongation factor Ts (292 aa).

Positions 82–85 (TDFV) are involved in Mg(2+) ion dislocation from EF-Tu.

It belongs to the EF-Ts family.

It is found in the cytoplasm. Its function is as follows. Associates with the EF-Tu.GDP complex and induces the exchange of GDP to GTP. It remains bound to the aminoacyl-tRNA.EF-Tu.GTP complex up to the GTP hydrolysis stage on the ribosome. The sequence is that of Elongation factor Ts from Legionella pneumophila (strain Paris).